Here is a 150-residue protein sequence, read N- to C-terminus: Small ribosomal subunit protein uS13 (150 aa).

The protein belongs to the universal ribosomal protein uS13 family. In terms of assembly, part of the 30S ribosomal subunit. Forms a loose heterodimer with protein S19. Forms two bridges to the 50S subunit in the 70S ribosome.

Its function is as follows. Located at the top of the head of the 30S subunit, it contacts several helices of the 16S rRNA. In the 70S ribosome it contacts the 23S rRNA (bridge B1a) and protein L5 of the 50S subunit (bridge B1b), connecting the 2 subunits; these bridges are implicated in subunit movement. This Methanocorpusculum labreanum (strain ATCC 43576 / DSM 4855 / Z) protein is Small ribosomal subunit protein uS13.